The primary structure comprises 385 residues: Ribosomal RNA large subunit methyltransferase G (385 aa).

The protein belongs to the methyltransferase superfamily. RlmG family.

The protein localises to the cytoplasm. The enzyme catalyses guanosine(1835) in 23S rRNA + S-adenosyl-L-methionine = N(2)-methylguanosine(1835) in 23S rRNA + S-adenosyl-L-homocysteine + H(+). In terms of biological role, specifically methylates the guanine in position 1835 (m2G1835) of 23S rRNA. The protein is Ribosomal RNA large subunit methyltransferase G of Vibrio campbellii (strain ATCC BAA-1116).